The primary structure comprises 919 residues: Phosphoenolpyruvate carboxylase (919 aa).

Residues His138 and Lys579 contribute to the active site.

It belongs to the PEPCase type 1 family. Mg(2+) is required as a cofactor.

The catalysed reaction is oxaloacetate + phosphate = phosphoenolpyruvate + hydrogencarbonate. Forms oxaloacetate, a four-carbon dicarboxylic acid source for the tricarboxylic acid cycle. This Corynebacterium efficiens (strain DSM 44549 / YS-314 / AJ 12310 / JCM 11189 / NBRC 100395) protein is Phosphoenolpyruvate carboxylase (ppc).